We begin with the raw amino-acid sequence, 321 residues long: Hex-5-enoyl-[acyl-carrier protein] acetylenase (321 aa).

2 consecutive transmembrane segments (helical) span residues 36–56 (FLLY…LLWW) and 62–82 (VEIG…SVGL). The short motif at 83 to 88 (HRYFAH) is the Histidine box-1 element. Residues 99-119 (VILAILGCMGAQGPVVSWVAV) form a helical membrane-spanning segment. The Histidine box-2 signature appears at 120-124 (HRRHH). The helical transmembrane segment at 188-208 (YVVWIVLGLLIPTILGGIIHG) threads the bilayer. The Histidine box-3 motif lies at 269-273 (QNNHH).

It belongs to the fatty acid desaturase type 2 family. The cofactor is Fe(2+).

It localises to the membrane. It catalyses the reaction 5-hexenoyl-[ACP] + 2 reduced [2Fe-2S]-[ferredoxin] + O2 + 2 H(+) = 5-hexynoyl-[ACP] + 2 oxidized [2Fe-2S]-[ferredoxin] + 2 H2O. The enzyme catalyses hexanoyl-[ACP] + 2 reduced [2Fe-2S]-[ferredoxin] + O2 + 2 H(+) = 5-hexenoyl-[ACP] + 2 oxidized [2Fe-2S]-[ferredoxin] + 2 H2O. Its function is as follows. Desaturase involved in the biosynthesis of jamaicamides, which show sodium channel blocking activity and fish toxicity. Catalyzes the conversion of 5-hexenoyl loaded onto the acyl carrier protein JamC (5-hexenoyl-JamC) to 5-hexynoyl-JamC. Can also catalyze the conversion of hexanoyl-JamC to 5-hexenoyl-JamC, but it cannot use free 5-hexenoic acid, 5-hexenoyl-CoA, 2-hexenoyl-JamC, 3-hexenoyl-JamC or 4-hexenoyl-JamC. Is specific for C(6) chains, and cannot use 4-pentenoyl-JamC, 6-heptenoyl-JamC or 7-octenoyl-JamC as substrate. This chain is Hex-5-enoyl-[acyl-carrier protein] acetylenase, found in Moorena producens (strain JHB).